The following is a 203-amino-acid chain: Reticulon-like protein B12 (203 aa).

The 180-residue stretch at 24-203 folds into the Reticulon domain; it reads VADVMLWRKK…WANPENKKLS (180 aa). The next 3 helical transmembrane spans lie at 34–54, 55–75, and 132–152; these read NVSV…EAFA, YTIF…LFLW, and VAVS…QTLC.

The protein localises to the endoplasmic reticulum membrane. This chain is Reticulon-like protein B12 (RTNLB12), found in Arabidopsis thaliana (Mouse-ear cress).